Consider the following 246-residue polypeptide: Bis(5'-nucleosyl)-tetraphosphatase PrpE [asymmetrical] (246 aa).

It belongs to the PrpE family. Ni(2+) serves as cofactor.

It catalyses the reaction P(1),P(4)-bis(5'-guanosyl) tetraphosphate + H2O = GMP + GTP + 2 H(+). In terms of biological role, asymmetrically hydrolyzes Ap4p to yield AMP and ATP. This is Bis(5'-nucleosyl)-tetraphosphatase PrpE [asymmetrical] from Bacillus cereus (strain Q1).